We begin with the raw amino-acid sequence, 271 residues long: Aquaporin-11 (271 aa).

The Cytoplasmic portion of the chain corresponds to 1–14; sequence MSALLGLRPEVQDT. Residues 15-35 form a helical membrane-spanning segment; sequence CISLGLMLLFVLFVGLARVIA. Over 36–41 the chain is Lumenal; it reads RQQLHR. The helical transmembrane segment at 42–62 threads the bilayer; the sequence is PVVHAFVLEFLATFQLCCCTH. Over 63-76 the chain is Cytoplasmic; the sequence is ELQVLSEQDSAHPT. A helical membrane pass occupies residues 77–97; it reads WTLTLIYFFSLVHGLTLVGTA. Over 98-166 the chain is Lumenal; that stretch reads SNPCGVMMQM…NPIHTDMSKA (69 aa). An NPC motif is present at residues 99 to 101; the sequence is NPC. Residues 167–187 traverse the membrane as a helical segment; the sequence is IIIEAICSFIFHSALLHFQEV. Topologically, residues 188–194 are cytoplasmic; sequence RTKLRIH. Residues 195–215 traverse the membrane as a helical segment; sequence LLAALITFLAYAGGSLTGALF. The short motif at 216–218 is the NPA element; sequence NPA. Residues 216 to 234 lie on the Lumenal side of the membrane; sequence NPALALSLHFPCFDELFYK. A helical membrane pass occupies residues 235 to 255; that stretch reads FFVVYWLAPSVGVLMMILMFS. Topologically, residues 256 to 271 are cytoplasmic; it reads FFLPWLHNNQMTNKKE.

Belongs to the MIP/aquaporin (TC 1.A.8) family. AQP11/AQP12 subfamily. Homodimer; disulfide-linked. Homotetramer. Can also form homomultimer. Not glycosylated. In terms of tissue distribution, highly expressed in the S1 proximal tubule segment,. Expressed in the testis, kidney, and liver. Weakly expressed in the heart, brain, and muscle. Highly expressed in the testis. Expressed in the proximal tubule of the cortex of 8-day-old mouse kidney. Expressed in retina specifically at retinal Mueller glial cells. Expressed in brain. Expressed abundantly at the choroid plexus but also expressed weakly in the parenchyma. Expressed at the capillary endothelium in the cerebral white matter. Expressed in adult testis, in the elongated spermatids (ES) and in residual bodies inside Sertoli cells.

It localises to the endoplasmic reticulum membrane. The protein localises to the cytoplasmic vesicle membrane. The protein resides in the cell membrane. The catalysed reaction is H2O(in) = H2O(out). It carries out the reaction glycerol(in) = glycerol(out). The enzyme catalyses H2O2(out) = H2O2(in). In terms of biological role, channel protein that facilitates the transport of water, glycerol and hydrogen peroxide across membrane of cell or organelles guaranteeing intracellular homeostasis in several organes like liver, kidney and brain. In situation of stress, participates in endoplasmic reticulum (ER) homeostasis by regulating redox homeostasis through the transport of hydrogen peroxide across the endoplasmic reticulum membrane thereby regulating the oxidative stress through the NADPH oxidase 2 pathway. Plays a role by maintaining an environment suitable for translation or protein foldings in the ER lumen namely by participating in the PKD1 glycosylation processing resulting in regulation of PKD1 membrane trafficking thereby preventing the accumulation of unfolding protein in ER. Plays a role in the proximal tubule function by regulating its endosomal acidification. May play a role in postnatal kidney development. This chain is Aquaporin-11, found in Mus musculus (Mouse).